Here is a 363-residue protein sequence, read N- to C-terminus: Glutamate 5-kinase (363 aa).

Lys-6 serves as a coordination point for ATP. The substrate site is built by Ser-46, Asp-133, and Asn-145. ATP is bound by residues 165-166 (TD) and 207-213 (TGGMHTK). The region spanning 271–349 (TGRLLLDEGA…RDIEAVLGFT (79 aa)) is the PUA domain.

Belongs to the glutamate 5-kinase family.

The protein localises to the cytoplasm. It carries out the reaction L-glutamate + ATP = L-glutamyl 5-phosphate + ADP. Its pathway is amino-acid biosynthesis; L-proline biosynthesis; L-glutamate 5-semialdehyde from L-glutamate: step 1/2. Catalyzes the transfer of a phosphate group to glutamate to form L-glutamate 5-phosphate. The chain is Glutamate 5-kinase from Deinococcus geothermalis (strain DSM 11300 / CIP 105573 / AG-3a).